The primary structure comprises 339 residues: Retinol dehydrogenase 10-A (339 aa).

The helical; Signal-anchor transmembrane segment at isoleucine 3 to phenylalanine 23 threads the bilayer. Valine 40–valine 64 contributes to the NADP(+) binding site. Serine 195 contributes to the substrate binding site. The active-site Proton acceptor is tyrosine 208.

This sequence belongs to the short-chain dehydrogenases/reductases (SDR) family.

Its subcellular location is the microsome membrane. It is found in the endoplasmic reticulum membrane. The catalysed reaction is all-trans-retinol + NADP(+) = all-trans-retinal + NADPH + H(+). It participates in cofactor metabolism; retinol metabolism. Functionally, retinol dehydrogenase with a clear preference for NADP. Converts all-trans-retinol to all-trans-retinal. Has no detectable activity towards 11-cis-retinol, 9-cis-retinol and 13-cis-retinol. The chain is Retinol dehydrogenase 10-A (rdh10a) from Danio rerio (Zebrafish).